We begin with the raw amino-acid sequence, 345 residues long: Golgi-associated RAB2 interactor protein 1B (345 aa).

Disordered regions lie at residues 222–241 (CSPS…SQPS) and 271–299 (SRSS…PCTR). Basic and acidic residues predominate over residues 275 to 285 (KKTENKKDSSG).

Belongs to the GARIN family.

The protein localises to the golgi apparatus. Functionally, RAB2B effector protein required for accurate acrosome formation and normal male fertility. In complex with RAB2A/RAB2B, seems to suppress excessive vesicle trafficking during acrosome formation. The polypeptide is Golgi-associated RAB2 interactor protein 1B (GARIN1B) (Bos taurus (Bovine)).